Consider the following 605-residue polypeptide: Probable potassium transport system protein Kup 3 (605 aa).

Helical transmembrane passes span 16–36 (ALGL…TVIF), 49–69 (ILSL…AWLA), 97–117 (VAFA…DAVI), 138–158 (GLST…LFSV), 170–190 (FGPI…VSAF), 212–232 (GLAG…GEAL), 247–267 (AWHF…VFAI), 287–307 (LYIP…QAII), 339–359 (IYLG…MLVF), 368–388 (AYGM…IIVF), 397–417 (ALVA…TFSK), and 418–438 (LPHG…TIII).

It belongs to the HAK/KUP transporter (TC 2.A.72) family.

Its subcellular location is the cell inner membrane. The catalysed reaction is K(+)(in) + H(+)(in) = K(+)(out) + H(+)(out). Transport of potassium into the cell. Likely operates as a K(+):H(+) symporter. In Geobacter sulfurreducens (strain ATCC 51573 / DSM 12127 / PCA), this protein is Probable potassium transport system protein Kup 3.